The following is a 156-amino-acid chain: Peptide methionine sulfoxide reductase MsrA (156 aa).

C10 is a catalytic residue.

The protein belongs to the MsrA Met sulfoxide reductase family.

It carries out the reaction L-methionyl-[protein] + [thioredoxin]-disulfide + H2O = L-methionyl-(S)-S-oxide-[protein] + [thioredoxin]-dithiol. The enzyme catalyses [thioredoxin]-disulfide + L-methionine + H2O = L-methionine (S)-S-oxide + [thioredoxin]-dithiol. Has an important function as a repair enzyme for proteins that have been inactivated by oxidation. Catalyzes the reversible oxidation-reduction of methionine sulfoxide in proteins to methionine. The polypeptide is Peptide methionine sulfoxide reductase MsrA (Acidobacterium capsulatum (strain ATCC 51196 / DSM 11244 / BCRC 80197 / JCM 7670 / NBRC 15755 / NCIMB 13165 / 161)).